Reading from the N-terminus, the 584-residue chain is Interferon regulatory factor 2-binding protein 1 (584 aa).

The interval 60–127 (VLPEGRSPGP…SGRLPLPSPA (68 aa)) is disordered. Phosphoserine is present on residues Ser66 and Ser125. Arg177 is subject to Omega-N-methylarginine. Ser186 is subject to Phosphoserine. Residues 197–217 (EKEKQQRNADCLAELNEAMRG) are a coiled coil. Lys227 participates in a covalent cross-link: Glycyl lysine isopeptide (Lys-Gly) (interchain with G-Cter in SUMO2). The segment at 346–420 (PAEALPQQYP…PYSAETPGVP (75 aa)) is disordered. A compositionally biased stretch (pro residues) spans 354 to 369 (YPEPAPAALCGPPPRA). A phosphoserine mark is found at Ser371, Ser384, Ser421, and Ser436. A disordered region spans residues 433-495 (LGHSPKDPGG…VSGGGSGTGA (63 aa)). Residue Lys438 forms a Glycyl lysine isopeptide (Lys-Gly) (interchain with G-Cter in SUMO2) linkage. Positions 449–463 (AGGASPAASSTAQPP) are enriched in low complexity. Ser453 and Ser457 each carry phosphoserine. The segment at 503-550 (CTLCRERLEDTHFVQCPSVPGHKFCFPCSREFIKAQGPAGEVYCPSGD) adopts an RING-type; degenerate zinc-finger fold. Positions 503-550 (CTLCRERLEDTHFVQCPSVPGHKFCFPCSREFIKAQGPAGEVYCPSGD) are cys-rich.

The protein belongs to the IRF2BP family. As to quaternary structure, interacts with IRF2. Part of a corepressor complex containing IRF2 and IRF2BP2. Interacts with JDP2.

It is found in the nucleus. The enzyme catalyses S-ubiquitinyl-[E2 ubiquitin-conjugating enzyme]-L-cysteine + [acceptor protein]-L-lysine = [E2 ubiquitin-conjugating enzyme]-L-cysteine + N(6)-ubiquitinyl-[acceptor protein]-L-lysine.. Its function is as follows. Acts as a transcriptional corepressor in a IRF2-dependent manner; this repression is not mediated by histone deacetylase activities. May act as an E3 ligase towards JDP2, enhancing its polyubiquitination. Represses ATF2-dependent transcriptional activation. The polypeptide is Interferon regulatory factor 2-binding protein 1 (IRF2BP1) (Homo sapiens (Human)).